Reading from the N-terminus, the 227-residue chain is tRNA (guanine-N(7)-)-methyltransferase (227 aa).

S-adenosyl-L-methionine-binding residues include Glu-60, Glu-85, Asp-112, and Asp-135. Residue Asp-135 is part of the active site. Residues Lys-139, Asp-171, and 206 to 209 (TKFE) contribute to the substrate site.

The protein belongs to the class I-like SAM-binding methyltransferase superfamily. TrmB family.

The catalysed reaction is guanosine(46) in tRNA + S-adenosyl-L-methionine = N(7)-methylguanosine(46) in tRNA + S-adenosyl-L-homocysteine. It participates in tRNA modification; N(7)-methylguanine-tRNA biosynthesis. Functionally, catalyzes the formation of N(7)-methylguanine at position 46 (m7G46) in tRNA. The sequence is that of tRNA (guanine-N(7)-)-methyltransferase from Thiobacillus denitrificans (strain ATCC 25259 / T1).